A 437-amino-acid chain; its full sequence is Dolichyl-diphosphooligosaccharide--protein glycosyltransferase 48 kDa subunit (437 aa).

The signal sequence occupies residues methionine 1 to alanine 24. Over glycine 25–tyrosine 407 the chain is Lumenal. A helical transmembrane segment spans residues proline 408 to leucine 428. Over histidine 429–aspartate 437 the chain is Cytoplasmic.

It belongs to the DDOST 48 kDa subunit family. Component of the oligosaccharyltransferase (OST) complex.

Its subcellular location is the endoplasmic reticulum membrane. The protein operates within protein modification; protein glycosylation. Its function is as follows. Subunit of the oligosaccharyl transferase (OST) complex that catalyzes the initial transfer of a defined glycan (Glc(3)Man(9)GlcNAc(2) in eukaryotes) from the lipid carrier dolichol-pyrophosphate to an asparagine residue within an Asn-X-Ser/Thr consensus motif in nascent polypeptide chains, the first step in protein N-glycosylation. N-glycosylation occurs cotranslationally and the complex associates with the Sec61 complex at the channel-forming translocon complex that mediates protein translocation across the endoplasmic reticulum (ER). All subunits are required for a maximal enzyme activity. Required for the assembly of both SST3A- and SS3B-containing OST complexes. The chain is Dolichyl-diphosphooligosaccharide--protein glycosyltransferase 48 kDa subunit from Xenopus tropicalis (Western clawed frog).